Reading from the N-terminus, the 101-residue chain is Acylphosphatase (101 aa).

The Acylphosphatase-like domain occupies 12-98 (RVHVFVTGRV…EGLRGFEVKR (87 aa)). Residues Arg27 and Asn45 contribute to the active site.

Belongs to the acylphosphatase family.

The catalysed reaction is an acyl phosphate + H2O = a carboxylate + phosphate + H(+). The protein is Acylphosphatase (acyP) of Trichormus variabilis (strain ATCC 29413 / PCC 7937) (Anabaena variabilis).